Reading from the N-terminus, the 215-residue chain is uncharacterized protein (215 aa).

Transmembrane regions (helical) follow at residues 21–40, 50–69, 95–117, 122–144, 157–179, and 185–207; these read IIKY…VLIN, LIFS…TIIF, FVAI…YVFF, LEIA…LVVL, NFVG…LILQ, and LIFI…SAYL.

It belongs to the CcmB/CycW/HelB family.

It localises to the cell membrane. This is an uncharacterized protein from Rickettsia prowazekii (strain Madrid E).